Reading from the N-terminus, the 216-residue chain is Probable nicotinate-nucleotide adenylyltransferase (216 aa).

It belongs to the NadD family.

It carries out the reaction nicotinate beta-D-ribonucleotide + ATP + H(+) = deamido-NAD(+) + diphosphate. The protein operates within cofactor biosynthesis; NAD(+) biosynthesis; deamido-NAD(+) from nicotinate D-ribonucleotide: step 1/1. Its function is as follows. Catalyzes the reversible adenylation of nicotinate mononucleotide (NaMN) to nicotinic acid adenine dinucleotide (NaAD). This chain is Probable nicotinate-nucleotide adenylyltransferase, found in Klebsiella pneumoniae subsp. pneumoniae (strain ATCC 700721 / MGH 78578).